The chain runs to 505 residues: ATP synthase subunit alpha (505 aa).

170–177 contributes to the ATP binding site; it reads GDRQTGKT.

This sequence belongs to the ATPase alpha/beta chains family. F-type ATPases have 2 components, CF(1) - the catalytic core - and CF(0) - the membrane proton channel. CF(1) has five subunits: alpha(3), beta(3), gamma(1), delta(1), epsilon(1). CF(0) has four main subunits: a(1), b(1), b'(1) and c(9-12).

The protein localises to the cellular thylakoid membrane. The enzyme catalyses ATP + H2O + 4 H(+)(in) = ADP + phosphate + 5 H(+)(out). Produces ATP from ADP in the presence of a proton gradient across the membrane. The alpha chain is a regulatory subunit. The polypeptide is ATP synthase subunit alpha (Prochlorococcus marinus (strain MIT 9303)).